We begin with the raw amino-acid sequence, 320 residues long: Lipoyl synthase (320 aa).

The disordered stretch occupies residues 1–27 (MRVEIDHRNSGGGKLRHPEKQHRPDNP). Basic and acidic residues predominate over residues 16-25 (RHPEKQHRPD). 7 residues coordinate [4Fe-4S] cluster: C61, C66, C72, C87, C91, C94, and S300. A Radical SAM core domain is found at 73 to 289 (WSQRHATMMI…AAMARAKGFL (217 aa)).

This sequence belongs to the radical SAM superfamily. Lipoyl synthase family. Requires [4Fe-4S] cluster as cofactor.

The protein resides in the cytoplasm. It carries out the reaction [[Fe-S] cluster scaffold protein carrying a second [4Fe-4S](2+) cluster] + N(6)-octanoyl-L-lysyl-[protein] + 2 oxidized [2Fe-2S]-[ferredoxin] + 2 S-adenosyl-L-methionine + 4 H(+) = [[Fe-S] cluster scaffold protein] + N(6)-[(R)-dihydrolipoyl]-L-lysyl-[protein] + 4 Fe(3+) + 2 hydrogen sulfide + 2 5'-deoxyadenosine + 2 L-methionine + 2 reduced [2Fe-2S]-[ferredoxin]. Its pathway is protein modification; protein lipoylation via endogenous pathway; protein N(6)-(lipoyl)lysine from octanoyl-[acyl-carrier-protein]: step 2/2. In terms of biological role, catalyzes the radical-mediated insertion of two sulfur atoms into the C-6 and C-8 positions of the octanoyl moiety bound to the lipoyl domains of lipoate-dependent enzymes, thereby converting the octanoylated domains into lipoylated derivatives. This chain is Lipoyl synthase, found in Acidiphilium cryptum (strain JF-5).